The following is an 821-amino-acid chain: Lysosomal beta glucosidase (821 aa).

The first 24 residues, 1–24, serve as a signal peptide directing secretion; it reads MKTIKSLFLLSLLIVNLLISSTYG. The propeptide occupies 25-69; the sequence is SSIRVSIVGGEEAEVIEKPRTFGNKRELKLEYSQIYPKKQLNQEN. 3 N-linked (GlcNAc...) asparagine glycosylation sites follow: Asn113, Asn146, and Asn266. Asp363 is an active-site residue. N-linked (GlcNAc...) asparagine glycans are attached at residues Asn535, Asn555, Asn703, and Asn721.

It belongs to the glycosyl hydrolase 3 family. Glycosylated. The polyoligosaccharides are of the high-mannose type and are highly substituted with both phosphate and sulfate moieties.

Its subcellular location is the lysosome. It carries out the reaction Hydrolysis of terminal, non-reducing beta-D-glucosyl residues with release of beta-D-glucose.. This is Lysosomal beta glucosidase (gluA) from Dictyostelium discoideum (Social amoeba).